Consider the following 1225-residue polypeptide: Catenin delta-2 (1225 aa).

Disordered stretches follow at residues methionine 1–isoleucine 51, serine 87–leucine 117, serine 134–aspartate 242, and serine 256–serine 312. 2 stretches are compositionally biased toward polar residues: residues glutamine 20–isoleucine 51 and alanine 98–aspartate 108. Residues serine 49–lysine 84 adopt a coiled-coil conformation. The segment covering serine 149 to serine 160 has biased composition (low complexity). 2 stretches are compositionally biased toward polar residues: residues tyrosine 172–glutamine 187 and alanine 195–arginine 209. Arginine 209 carries the post-translational modification Omega-N-methylarginine. The segment covering glutamate 217–proline 229 has biased composition (pro residues). The residue at position 264 (arginine 264) is an Omega-N-methylarginine. 2 positions are modified to phosphoserine: serine 267 and serine 276. Omega-N-methylarginine occurs at positions 282 and 296. Positions serine 299 to serine 312 are enriched in polar residues. Phosphoserine occurs at positions 327, 360, 415, and 461. One copy of the ARM 1 repeat lies at glycine 394–serine 438. Disordered stretches follow at residues proline 432–alanine 483 and serine 514–proline 542. The segment covering leucine 469–proline 478 has biased composition (polar residues). Serine 514 carries the post-translational modification Phosphoserine. A Phosphotyrosine modification is found at tyrosine 516. ARM repeat units lie at residues lysine 540–phenylalanine 579, asparagine 582–tyrosine 621, aspartate 626–serine 666, leucine 682–serine 724, glutamate 728–tyrosine 773, proline 835–alanine 875, valine 882–leucine 921, and methionine 975–glutamine 1018. The tract at residues threonine 1042–proline 1077 is disordered. Over residues proline 1050–isoleucine 1059 the composition is skewed to polar residues. Phosphoserine is present on residues serine 1065 and serine 1076. Residues serine 1065–proline 1077 show a composition bias toward low complexity.

The protein belongs to the beta-catenin family. In terms of assembly, binds to E-cadherin at a juxtamembrane site within the cytoplasmic domain. Interacts with PDZD2. Interacts with ZBTB33. Binds to PSEN1. Interacts with ARHGEF28. Interacts (via the extreme C-terminus) with FRMPD2 (via the PDZ 2 domain). Interacts with CDK5. Interacts with CTNNB1. Interacts with GSK3A and GSK3B. Interacts with DNM2. Interacts with CCDC85B. Post-translationally, O-glycosylated. In terms of processing, phosphorylated by CDK5. Phosphorylated by GSK3B. In terms of tissue distribution, expressed in brain; highest expression is observed in fetal brain.

It localises to the nucleus. Its subcellular location is the cell junction. It is found in the adherens junction. The protein resides in the cell projection. The protein localises to the dendrite. It localises to the perikaryon. Its function is as follows. Has a critical role in neuronal development, particularly in the formation and/or maintenance of dendritic spines and synapses. Involved in the regulation of Wnt signaling. It probably acts on beta-catenin turnover, facilitating beta-catenin interaction with GSK3B, phosphorylation, ubiquitination and degradation. Functions as a transcriptional activator when bound to ZBTB33. May be involved in neuronal cell adhesion and tissue morphogenesis and integrity by regulating adhesion molecules. The sequence is that of Catenin delta-2 (CTNND2) from Homo sapiens (Human).